The following is a 148-amino-acid chain: Large ribosomal subunit protein uL15 (148 aa).

The tract at residues 1–50 (MNLSNLKPAEGSTKTRKRIGRGPGSGLGGTSTRGHKGAKSRSGYSKKIGF) is disordered. Residues 21 to 31 (RGPGSGLGGTS) are compositionally biased toward gly residues.

Belongs to the universal ribosomal protein uL15 family. As to quaternary structure, part of the 50S ribosomal subunit.

Its function is as follows. Binds to the 23S rRNA. In Bacteroides fragilis (strain ATCC 25285 / DSM 2151 / CCUG 4856 / JCM 11019 / LMG 10263 / NCTC 9343 / Onslow / VPI 2553 / EN-2), this protein is Large ribosomal subunit protein uL15.